Consider the following 265-residue polypeptide: Putative 2-amino-3,7-dideoxy-D-threo-hept-6-ulosonate synthase 2 (265 aa).

Residue Asp-27 is the Proton acceptor of the active site. Residues 27–31 (DHGVS) and 147–149 (YPR) each bind 1-deoxy-D-threo-hexo-2,5-diulose 6-phosphate. Tyr-147 (proton donor) is an active-site residue. Lys-177 functions as the Schiff-base intermediate with substrate in the catalytic mechanism. 1-deoxy-D-threo-hexo-2,5-diulose 6-phosphate-binding positions include 202–203 (GG) and 230–231 (GR).

This sequence belongs to the DeoC/FbaB aldolase family. ADHS subfamily. In terms of assembly, homodecamer.

The catalysed reaction is 1-deoxy-D-threo-hexo-2,5-diulose 6-phosphate + L-aspartate 4-semialdehyde = 2,3-dioxopropyl phosphate + 2-amino-2,3,7-trideoxy-D-lyxo-hept-6-ulosonate. Catalyzes a transaldol reaction between 6-deoxy-5-ketofructose 1-phosphate (DKFP) and L-aspartate semialdehyde (ASA) with an elimination of hydroxypyruvaldehyde phosphate to yield 2-amino-3,7-dideoxy-D-threo-hept-6-ulosonate (ADH). Plays a key role in an alternative pathway of the biosynthesis of 3-dehydroquinate (DHQ), which is involved in the canonical pathway for the biosynthesis of aromatic amino acids. This is Putative 2-amino-3,7-dideoxy-D-threo-hept-6-ulosonate synthase 2 from Archaeoglobus fulgidus (strain ATCC 49558 / DSM 4304 / JCM 9628 / NBRC 100126 / VC-16).